A 614-amino-acid polypeptide reads, in one-letter code: RNA polymerase sigma factor RpoD (614 aa).

The disordered stretch occupies residues Asp-168–Gly-245. Positions Glu-193 to Glu-209 are enriched in acidic residues. A compositionally biased stretch (polar residues) spans Thr-215–Asp-232. The interval Met-380–Thr-450 is sigma-70 factor domain-2. Residues Asp-404–Gln-407 carry the Interaction with polymerase core subunit RpoC motif. The sigma-70 factor domain-3 stretch occupies residues Glu-459–Val-535. The sigma-70 factor domain-4 stretch occupies residues Val-548–His-601. The segment at residues Leu-574–Ala-593 is a DNA-binding region (H-T-H motif).

This sequence belongs to the sigma-70 factor family. RpoD/SigA subfamily. In terms of assembly, interacts transiently with the RNA polymerase catalytic core.

Its subcellular location is the cytoplasm. In terms of biological role, sigma factors are initiation factors that promote the attachment of RNA polymerase to specific initiation sites and are then released. This sigma factor is the primary sigma factor during exponential growth. The protein is RNA polymerase sigma factor RpoD of Pseudomonas putida (Arthrobacter siderocapsulatus).